The primary structure comprises 553 residues: Phosphoglucomutase (553 aa).

Residues 1–24 form a disordered region; sequence MQATVKRYPTTPISGQTMGTSGLR. A compositionally biased stretch (polar residues) spans 11 to 20; the sequence is TPISGQTMGT. Residues threonine 20, arginine 24, 117–118, and lysine 131 contribute to the substrate site; that span reads SH. The Phosphoserine intermediate role is filled by serine 117. Position 117 (serine 117) interacts with Mg(2+). Residues aspartate 289, aspartate 291, and aspartate 293 each contribute to the Mg(2+) site. Residues 293–294, threonine 352, 371–373, lysine 384, and arginine 509 contribute to the substrate site; these read DR and EES.

This sequence belongs to the phosphohexose mutase family. The cofactor is Mg(2+).

It is found in the cytoplasm. It catalyses the reaction alpha-D-glucose 1-phosphate = alpha-D-glucose 6-phosphate. Functionally, this enzyme participates in both the breakdown and synthesis of glucose. In Entamoeba dispar, this protein is Phosphoglucomutase (pgm).